Reading from the N-terminus, the 108-residue chain is UPF0060 membrane protein YnfA (108 aa).

The Periplasmic segment spans residues 1 to 5 (MIKTT). A helical transmembrane segment spans residues 6 to 26 (LLFFATALCEIIGCFLPWLWL). The Cytoplasmic segment spans residues 27–30 (KRNA). Residues 31 to 51 (SIWLLLPAGISLALFVWLLTL) form a helical membrane-spanning segment. The Periplasmic portion of the chain corresponds to 52-60 (HPAASGRVY). Residues 61-81 (AAYGGVYVCTALMWLRVVDGV) traverse the membrane as a helical segment. Residues 82–84 (KLT) are Cytoplasmic-facing. The chain crosses the membrane as a helical span at residues 85–105 (LYDWTGALIALCGMLIIVAGW). Topologically, residues 106–108 (GRT) are periplasmic.

It belongs to the UPF0060 family.

It localises to the cell inner membrane. This Escherichia coli O139:H28 (strain E24377A / ETEC) protein is UPF0060 membrane protein YnfA.